The following is a 252-amino-acid chain: 5'-nucleotidase SurE (252 aa).

A divalent metal cation-binding residues include aspartate 8, aspartate 9, serine 39, and asparagine 91.

The protein belongs to the SurE nucleotidase family. A divalent metal cation serves as cofactor.

It is found in the cytoplasm. The enzyme catalyses a ribonucleoside 5'-phosphate + H2O = a ribonucleoside + phosphate. Nucleotidase that shows phosphatase activity on nucleoside 5'-monophosphates. This chain is 5'-nucleotidase SurE, found in Bordetella pertussis (strain Tohama I / ATCC BAA-589 / NCTC 13251).